The following is a 1400-amino-acid chain: S phase cyclin A-associated protein in the endoplasmic reticulum (1400 aa).

Disordered regions lie at residues 36–61 (ESKD…GTHK), 226–277 (VKAH…IRSR), 517–550 (PARP…HEEK), and 701–723 (RIEQ…RARD). Residues 231 to 243 (TGSTASSEITPAQ) show a composition bias toward polar residues. Residues 539–550 (TIAESKKKHEEK) show a composition bias toward basic and acidic residues. The C2H2-type zinc finger occupies 792 to 816 (KQCSLCNVLISSEVYLFSHVKGRKH). S832 is modified (phosphoserine).

Interacts with CCNA2/CDK2 complex, but not with CCNA2/CDC2, CCNB1/CDC2 or CCNE1/CDK2 complexes, at multiple phases of the cell cycle, including S and G2/M. Phosphorylated in vitro by the CCNA2/CDK2 complex. As to expression, widely expressed with high expression in testis. Isoform 1 is detected in various tissues, including retina, fetal and adult brain. Isoform 2 is expressed in the retina at high levels, and in the brain at very low levels.

Its subcellular location is the endoplasmic reticulum. It is found in the nucleus. In terms of biological role, CCNA2/CDK2 regulatory protein that transiently maintains CCNA2 in the cytoplasm. In Homo sapiens (Human), this protein is S phase cyclin A-associated protein in the endoplasmic reticulum.